The following is a 638-amino-acid chain: MTTDTLEKPRLSDTAQVDSQSIAPFPNSKKIYVQGSRPDIRVPMREINLSITPTEFGGEQNPPVRVYDTSGVYTDPNVKIDVRQGLPDVRSAWIAERGDTEVLQQKSSSFTQQRLHDASLDTLRFNHQRQPLKAKPRANVTQMHYARCGIITPEMEYIAIRENMSWQQAKEQGVLDQQHAGEHFGANIPDEITPEFVRSEVACGRAIIPANINHPELEPMIIGRNFLVKINGNIGNSAVTSSIEEEVAKLTWGTRWGADTIMDLSTGKNIHETREWIIRNSSVPIGTVPIYQALEKVDGVAEDLTWEIFRDTLIEQAEQGVDYFTIHAGVLLRYVPLTAKRVTGIVSRGGSIMAKWCLAHHRENFLYTHFEDICEIMKAYDVSFSLGDGLRPGSIADANDEAQFGELETLGELTKIAWKHDVQVMIEGPGHVPMHMIKENMDKQLRECGEAPFYTLGPLTTDIAPGYDHITSGIGAAMIGWYGCAMLCYVTPKEHLGLPNKDDVKEGIITYKIAAHAADLAKGHPGAQLRDNALSKARFEFRWEDQFNLGLDPDTARSYHDETLPKDSAKVAHFCSMCGPKFCSMKITQEVRDYAAEHGTDITPIAEDEVVRMIDVEAEMRKKSEEFREKGSEIYGKI.

Residues asparagine 233, methionine 262, tyrosine 291, histidine 327, 347–349, 388–391, and glutamate 427 each bind substrate; these read SRG and DGLR. Zn(2+) is bound at residue histidine 431. Tyrosine 454 contacts substrate. Histidine 495 lines the Zn(2+) pocket. [4Fe-4S] cluster is bound by residues cysteine 575, cysteine 578, and cysteine 583.

The protein belongs to the ThiC family. In terms of assembly, homodimer. [4Fe-4S] cluster is required as a cofactor.

It catalyses the reaction 5-amino-1-(5-phospho-beta-D-ribosyl)imidazole + S-adenosyl-L-methionine = 4-amino-2-methyl-5-(phosphooxymethyl)pyrimidine + CO + 5'-deoxyadenosine + formate + L-methionine + 3 H(+). Its pathway is cofactor biosynthesis; thiamine diphosphate biosynthesis. Catalyzes the synthesis of the hydroxymethylpyrimidine phosphate (HMP-P) moiety of thiamine from aminoimidazole ribotide (AIR) in a radical S-adenosyl-L-methionine (SAM)-dependent reaction. The protein is Phosphomethylpyrimidine synthase of Saccharophagus degradans (strain 2-40 / ATCC 43961 / DSM 17024).